A 264-amino-acid polypeptide reads, in one-letter code: Small ribosomal subunit protein uS2 (264 aa).

A disordered region spans residues 228 to 264 (HEDVSAGPVEEQSDEAQAAEQGTEGDTAQLTSSQGRS). Positions 251-264 (EGDTAQLTSSQGRS) are enriched in polar residues.

The protein belongs to the universal ribosomal protein uS2 family.

This chain is Small ribosomal subunit protein uS2, found in Deinococcus radiodurans (strain ATCC 13939 / DSM 20539 / JCM 16871 / CCUG 27074 / LMG 4051 / NBRC 15346 / NCIMB 9279 / VKM B-1422 / R1).